Consider the following 73-residue polypeptide: MLVMGRKKGESILIGDDIEITIVSLDENSVKIAINAPREVTILRKELYNKIKEENKEAVIKSSEVLKELTLKK.

Belongs to the CsrA/RsmA family. In terms of assembly, homodimer; the beta-strands of each monomer intercalate to form a hydrophobic core, while the alpha-helices form wings that extend away from the core.

Its subcellular location is the cytoplasm. Its function is as follows. A translational regulator that binds mRNA to regulate translation initiation and/or mRNA stability. Usually binds in the 5'-UTR at or near the Shine-Dalgarno sequence preventing ribosome-binding, thus repressing translation. Its main target seems to be the major flagellin gene, while its function is anatagonized by FliW. In Clostridium acetobutylicum (strain ATCC 824 / DSM 792 / JCM 1419 / IAM 19013 / LMG 5710 / NBRC 13948 / NRRL B-527 / VKM B-1787 / 2291 / W), this protein is Translational regulator CsrA.